We begin with the raw amino-acid sequence, 385 residues long: Outer membrane protein P2 (385 aa).

Residues 1–20 (MKKTLAALIVGAFAASAANA) form the signal peptide.

This sequence belongs to the Gram-negative porin family. Homotrimer.

The protein localises to the cell outer membrane. Forms pores that allow passive diffusion of small molecules across the outer membrane. The sequence is that of Outer membrane protein P2 (ompP2) from Haemophilus influenzae.